We begin with the raw amino-acid sequence, 391 residues long: Carbamoyl phosphate synthase small chain (391 aa).

The segment at 1–189 is CPSase; it reads MIKSALLVLE…DLPAAKQPED (189 aa). Residues serine 47, glycine 241, and glycine 243 each contribute to the L-glutamine site. Residues 193–380 form the Glutamine amidotransferase type-1 domain; the sequence is HVVAYDYGVK…IELIEAYRAS (188 aa). Cysteine 269 acts as the Nucleophile in catalysis. L-glutamine-binding residues include leucine 270, glutamine 273, asparagine 311, glycine 313, and phenylalanine 314. Catalysis depends on residues histidine 353 and glutamate 355.

The protein belongs to the CarA family. Composed of two chains; the small (or glutamine) chain promotes the hydrolysis of glutamine to ammonia, which is used by the large (or ammonia) chain to synthesize carbamoyl phosphate. Tetramer of heterodimers (alpha,beta)4.

It catalyses the reaction hydrogencarbonate + L-glutamine + 2 ATP + H2O = carbamoyl phosphate + L-glutamate + 2 ADP + phosphate + 2 H(+). The enzyme catalyses L-glutamine + H2O = L-glutamate + NH4(+). It functions in the pathway amino-acid biosynthesis; L-arginine biosynthesis; carbamoyl phosphate from bicarbonate: step 1/1. It participates in pyrimidine metabolism; UMP biosynthesis via de novo pathway; (S)-dihydroorotate from bicarbonate: step 1/3. Functionally, small subunit of the glutamine-dependent carbamoyl phosphate synthetase (CPSase). CPSase catalyzes the formation of carbamoyl phosphate from the ammonia moiety of glutamine, carbonate, and phosphate donated by ATP, constituting the first step of 2 biosynthetic pathways, one leading to arginine and/or urea and the other to pyrimidine nucleotides. The small subunit (glutamine amidotransferase) binds and cleaves glutamine to supply the large subunit with the substrate ammonia. This chain is Carbamoyl phosphate synthase small chain, found in Yersinia pestis.